Here is a 723-residue protein sequence, read N- to C-terminus: MAGRLREERKYRQKNRGLVQERIRLSLVVWESRKQGTSGQAKNFITRTQAVRKLQISLPDFRRLCIFKGIYPREPRNKKKASKAATPSTTFYYTRDIQYLLHEPLLKKFREQKALSKKIARALGRGEVGNAARLEKNNAPKLSLDHIIKERYPTFIDALRDLDDALSLLFLFANLPSTTSVPAKTITLCQRLCHEFQHYLIATNSLRKSFLSIKGIYYQATILGQDIMWLVPYRFVQRVTGDVDYRIMGTFVEFYTTLLGFVNYKLYTSIGLVYPPKFDKSSDERGAELAAFTLEGRYFGEAHKAIETSRQPNGSAEKAATTSKELQAKVDNILEKTQLDTDPTDQSTEDQEENIEAIDKFEPIAPEADSLPQPQISGDEAGSLFATFTFYISREAPRAPLEFLLRSFGCKRIGWDSVLGDGAFTHDELDARITHQIVDRPQLPQASLPPLPKNPEDGTEAAPRPGTRVPGRTYIQPQWVWDCINEGKLLRPDLYAPGATLPPHLSPWVKPSERGYDPRASLADQEEEGEAERAAEAEEYENDEQEESGEESTKSKQSKELLANLARDSGDENTSGDESVNGGMDIAMAEDTDESSDDGDGADKFEGFDQDEDMSSESEDEEEKARSQHQKELEAEAAGLPFSASSQAESGTIRGKKQQAPLAKKRAAQKKKEEEELERQKMMMSRKKRKLLDKMIYSNKKQDAEAEKLRQKRRKIEQGLNKK.

A BRCT domain is found at 380–497; the sequence is EAGSLFATFT…KLLRPDLYAP (118 aa). Disordered regions lie at residues 440-471 and 501-723; these read RPQL…RVPG and LPPH…LNKK. Positions 522–551 form a coiled coil; the sequence is LADQEEEGEAERAAEAEEYENDEQEESGEE. Composition is skewed to acidic residues over residues 537–550, 588–600, and 608–622; these read AEEY…ESGE, MAED…DDGD, and FDQD…EDEE. Composition is skewed to basic and acidic residues over residues 623-634, 670-681, and 700-709; these read EKARSQHQKELE, KKKEEEELERQK, and KKQDAEAEKL. Residues 656–723 adopt a coiled-coil conformation; it reads KKQQAPLAKK…RKIEQGLNKK (68 aa). Basic residues predominate over residues 710–723; that stretch reads RQKRRKIEQGLNKK.

The protein belongs to the pescadillo family. Component of the NOP7 complex, composed of ERB1, NOP7 and YTM1. The complex is held together by ERB1, which interacts with NOP7 via its N-terminal domain and with YTM1 via a high-affinity interaction between the seven-bladed beta-propeller domains of the 2 proteins. The NOP7 complex associates with the 66S pre-ribosome.

The protein localises to the nucleus. Its subcellular location is the nucleolus. It localises to the nucleoplasm. Functionally, component of the NOP7 complex, which is required for maturation of the 25S and 5.8S ribosomal RNAs and formation of the 60S ribosome. This is Pescadillo homolog from Ajellomyces capsulatus (strain NAm1 / WU24) (Darling's disease fungus).